Consider the following 998-residue polypeptide: Ephrin type-B receptor 3 (998 aa).

The N-terminal stretch at 1-33 (MARARPPPPPSPPPGLLPLLPPLLLLPLLLLPA) is a signal peptide. The Extracellular segment spans residues 34–559 (GCRALEETLM…AQQLQEQLPL (526 aa)). An Eph LBD domain is found at 39-217 (EETLMDTKWV…FYKKCASTTA (179 aa)). Cys-81 and Cys-199 are joined by a disulfide. Fibronectin type-III domains follow at residues 339-451 (VPSP…TNQA) and 452-545 (APSE…TTSE). Residues Asn-351 and Asn-445 are each glycosylated (N-linked (GlcNAc...) asparagine). Residues 560–580 (IVGSATAGLVFVVAVVVIAIV) traverse the membrane as a helical segment. Residues 581-998 (CLRKQRHGSD…QMNQTLPVQV (418 aa)) lie on the Cytoplasmic side of the membrane. Tyr-614 carries the post-translational modification Phosphotyrosine; by autocatalysis. Positions 633-896 (VKIEEVIGAG…QIVNTLDKLI (264 aa)) constitute a Protein kinase domain. Residues 639–647 (IGAGEFGEV) and Lys-665 each bind ATP. The active-site Proton acceptor is the Asp-758. Residues 925 to 989 (TTFTTVGDWL…LSSIQDMRLQ (65 aa)) enclose the SAM domain. The PDZ-binding motif lies at 996 to 998 (VQV).

Belongs to the protein kinase superfamily. Tyr protein kinase family. Ephrin receptor subfamily. As to quaternary structure, heterotetramer upon binding of the ligand. The heterotetramer is composed of an ephrin dimer and a receptor dimer. Oligomerization is probably required to induce biological responses. In terms of processing, phosphorylated. Autophosphorylates upon ligand-binding. Autophosphorylation on Tyr-614 is required for interaction with SH2 domain-containing proteins. Ubiquitinated by RNF186, mainly through 'Lys-48' and 'Lys-63'-linked polyubiquitin chains. As to expression, ubiquitous.

Its subcellular location is the cell membrane. It localises to the cell projection. The protein localises to the dendrite. The catalysed reaction is L-tyrosyl-[protein] + ATP = O-phospho-L-tyrosyl-[protein] + ADP + H(+). In terms of biological role, receptor tyrosine kinase which binds promiscuously transmembrane ephrin-B family ligands residing on adjacent cells, leading to contact-dependent bidirectional signaling into neighboring cells. The signaling pathway downstream of the receptor is referred to as forward signaling while the signaling pathway downstream of the ephrin ligand is referred to as reverse signaling. Generally has an overlapping and redundant function with EPHB2. Like EPHB2, functions in axon guidance during development regulating for instance the neurons forming the corpus callosum and the anterior commissure, 2 major interhemispheric connections between the temporal lobes of the cerebral cortex. In addition to its role in axon guidance also plays an important redundant role with other ephrin-B receptors in development and maturation of dendritic spines and the formation of excitatory synapses. Controls other aspects of development through regulation of cell migration and positioning. This includes angiogenesis, palate development and thymic epithelium development for instance. Forward and reverse signaling through the EFNB2/EPHB3 complex also regulate migration and adhesion of cells that tubularize the urethra and septate the cloaca. Finally, plays an important role in intestinal epithelium differentiation segregating progenitor from differentiated cells in the crypt. The sequence is that of Ephrin type-B receptor 3 (EPHB3) from Homo sapiens (Human).